Here is a 402-residue protein sequence, read N- to C-terminus: Propionate kinase (402 aa).

Residues asparagine 11 and lysine 18 each coordinate ATP. A Mg(2+)-binding site is contributed by asparagine 11. Arginine 86 serves as a coordination point for substrate. The active-site Proton donor/acceptor is aspartate 143. Residues histidine 175, 203-207 (HLGNG), 278-280 (DLR), and 326-330 (GIGEN) each bind ATP.

This sequence belongs to the acetokinase family. TdcD subfamily. As to quaternary structure, homodimer. Mg(2+) is required as a cofactor.

The enzyme catalyses propanoate + ATP = propanoyl phosphate + ADP. The protein operates within amino-acid degradation; L-threonine degradation via propanoate pathway; propanoate from L-threonine: step 4/4. Functionally, catalyzes the conversion of propionyl phosphate and ADP to propionate and ATP. This is Propionate kinase from Salmonella agona (strain SL483).